Here is a 152-residue protein sequence, read N- to C-terminus: Lipoprotein signal peptidase (152 aa).

Helical transmembrane passes span 5–25 (LFVL…FWIV), 61–81 (WFFV…LATH), and 84–104 (LNIW…GNFI). Catalysis depends on residues D114 and D130. The chain crosses the membrane as a helical span at residues 125-145 (IFNVADSYLTVGVILLVICLW).

The protein belongs to the peptidase A8 family.

It is found in the cell membrane. It catalyses the reaction Release of signal peptides from bacterial membrane prolipoproteins. Hydrolyzes -Xaa-Yaa-Zaa-|-(S,diacylglyceryl)Cys-, in which Xaa is hydrophobic (preferably Leu), and Yaa (Ala or Ser) and Zaa (Gly or Ala) have small, neutral side chains.. It functions in the pathway protein modification; lipoprotein biosynthesis (signal peptide cleavage). Its function is as follows. This protein specifically catalyzes the removal of signal peptides from prolipoproteins. The polypeptide is Lipoprotein signal peptidase (Streptococcus pyogenes serotype M3 (strain ATCC BAA-595 / MGAS315)).